A 1872-amino-acid polypeptide reads, in one-letter code: Histone acetyltransferase KAT6B (1872 aa).

The SAMD1-like winged helix (WH) domain maps to 1-77 (MVKLANPLYT…LASYKDPDNP (77 aa)). 2 disordered regions span residues 70–103 (SYKD…CNDL) and 168–207 (KEGP…HEKD). Positions 104–177 (RNVDWNKLLK…KEGPQYRVNS (74 aa)) constitute an H15 domain. The span at 189-202 (PSAFPSSLPPVSLL) shows a compositional bias: low complexity. 2 PHD-type zinc fingers span residues 214 to 273 (IPIC…CKTC) and 270 to 321 (CKTC…CRPK). Phosphoserine is present on serine 356. The segment at 361-417 (EGSMSAFTGRGSPGRGQKTKVSTTPSSGHAASGKHSSSRLAVTDPTRPGATTKTTTS) is disordered. A negatively regulates HAT activity region spans residues 362-535 (GSMSAFTGRG…ECESGVEDCG (174 aa)). Positions 386–395 (SSGHAASGKH) are enriched in low complexity. Residue lysine 491 forms a Glycyl lysine isopeptide (Lys-Gly) (interchain with G-Cter in SUMO2) linkage. One can recognise an MYST-type HAT domain in the interval 533-807 (DCGRYPSVIE…LDPESLRWTP (275 aa)). The segment at 536–826 (RYPSVIEFGK…EEEREAEKEA (291 aa)) is catalytic. A C2HC MYST-type zinc finger spans residues 566-591 (LYLCEFCLKYMKSKNILLRHSKKCGW). Residues 570 to 826 (EFCLKYMKSK…EEEREAEKEA (257 aa)) form an interaction with BRPF1 region. At lysine 633 the chain carries N6-acetyllysine; by autocatalysis. Acetyl-CoA contacts are provided by residues 674–678 (SCIMI) and 683–689 (QRQGFGR). Residue glutamate 709 is the Proton donor/acceptor of the active site. Position 713 (serine 713) interacts with acetyl-CoA. Positions 846-860 (SRVSSRQSSAKVQSK) are enriched in low complexity. Disordered stretches follow at residues 846 to 1018 (SRVS…NHFF), 1031 to 1252 (DAEH…FKDA), 1283 to 1358 (MSCN…DDTF), and 1388 to 1418 (DECQ…SPSV). 3 positions are modified to N6-acetyllysine: lysine 856, lysine 860, and lysine 862. A Phosphoserine modification is found at serine 866. Over residues 887-909 (SEEEEEEEEEDDEEEEEEEEEES) the composition is skewed to acidic residues. Polar residues predominate over residues 910–924 (IQTSPPRLTKPQSVS). The segment covering 925-944 (IKRKRPFVVKKKRGRKRRRI) has biased composition (basic residues). The span at 946–959 (SSVTTETISETTEV) shows a compositional bias: low complexity. Positions 991 to 1004 (PVLRKAFPHQPGKK) are enriched in basic residues. 2 stretches are compositionally biased toward basic and acidic residues: residues 1031–1047 (DAEH…EPLK) and 1094–1114 (EEQK…REVT). The segment covering 1155–1176 (EEGEEEGEEEGEREEQEEEEEV) has biased composition (acidic residues). The segment covering 1177–1207 (TTEKDLDGAKSKENPEPEISMEKEDPVHLGD) has biased composition (basic and acidic residues). Residues 1208–1217 (HEEDEDEEEE) show a composition bias toward acidic residues. Composition is skewed to basic and acidic residues over residues 1238–1252 (NMER…FKDA) and 1310–1320 (QTQKQDQKNSD). The segment covering 1339–1349 (ETAQAVQSLTQ) has biased composition (polar residues). Residues 1359-1872 (PDCAETQEAC…QSLNGSYMRR (514 aa)) are interaction with RUNX1 and RUNX2. The span at 1393–1410 (SDHSSPVSSVHSHPGQSV) shows a compositional bias: low complexity.

It belongs to the MYST (SAS/MOZ) family. Component of the MOZ/MORF complex composed at least of ING5, KAT6A, KAT6B, MEAF6 and one of BRPF1, BRD1/BRPF2 and BRPF3. Interacts with RUNX1 and RUNX2. Autoacetylation at Lys-633 is required for proper function. In terms of tissue distribution, ubiquitously expressed.

The protein resides in the nucleus. It carries out the reaction L-lysyl-[protein] + acetyl-CoA = N(6)-acetyl-L-lysyl-[protein] + CoA + H(+). Histone acetyltransferase which may be involved in both positive and negative regulation of transcription. Required for RUNX2-dependent transcriptional activation. Component of the MOZ/MORF complex which has a histone H3 acetyltransferase activity. Involved in cerebral cortex development. The polypeptide is Histone acetyltransferase KAT6B (Kat6b) (Mus musculus (Mouse)).